We begin with the raw amino-acid sequence, 165 residues long: Phosphopantetheine adenylyltransferase (165 aa).

T10 contributes to the substrate binding site. Residues 10–11 (TF) and H18 each bind ATP. Residues K42, L74, and R88 each coordinate substrate. Residues 89–91 (GLR), E99, and 124–130 (NAFISSS) contribute to the ATP site.

The protein belongs to the bacterial CoaD family. As to quaternary structure, homohexamer. The cofactor is Mg(2+).

Its subcellular location is the cytoplasm. It catalyses the reaction (R)-4'-phosphopantetheine + ATP + H(+) = 3'-dephospho-CoA + diphosphate. It participates in cofactor biosynthesis; coenzyme A biosynthesis; CoA from (R)-pantothenate: step 4/5. Its function is as follows. Reversibly transfers an adenylyl group from ATP to 4'-phosphopantetheine, yielding dephospho-CoA (dPCoA) and pyrophosphate. The chain is Phosphopantetheine adenylyltransferase from Helicobacter hepaticus (strain ATCC 51449 / 3B1).